Here is a 467-residue protein sequence, read N- to C-terminus: UDP-N-acetylmuramate--L-alanine ligase (467 aa).

114–120 (GTHGKTT) contributes to the ATP binding site.

Belongs to the MurCDEF family.

Its subcellular location is the cytoplasm. The enzyme catalyses UDP-N-acetyl-alpha-D-muramate + L-alanine + ATP = UDP-N-acetyl-alpha-D-muramoyl-L-alanine + ADP + phosphate + H(+). It participates in cell wall biogenesis; peptidoglycan biosynthesis. Its function is as follows. Cell wall formation. This chain is UDP-N-acetylmuramate--L-alanine ligase, found in Bradyrhizobium diazoefficiens (strain JCM 10833 / BCRC 13528 / IAM 13628 / NBRC 14792 / USDA 110).